We begin with the raw amino-acid sequence, 71 residues long: Small ribosomal subunit protein bS21 (71 aa).

This sequence belongs to the bacterial ribosomal protein bS21 family.

In Baumannia cicadellinicola subsp. Homalodisca coagulata, this protein is Small ribosomal subunit protein bS21.